Consider the following 421-residue polypeptide: Imidazolonepropionase (421 aa).

2 residues coordinate Fe(3+): H81 and H83. Zn(2+) contacts are provided by H81 and H83. R90, Y153, and H186 together coordinate 4-imidazolone-5-propanoate. Y153 is a binding site for N-formimidoyl-L-glutamate. Residue H251 coordinates Fe(3+). H251 serves as a coordination point for Zn(2+). E254 contributes to the 4-imidazolone-5-propanoate binding site. D326 lines the Fe(3+) pocket. D326 serves as a coordination point for Zn(2+). N328 and G330 together coordinate N-formimidoyl-L-glutamate. Position 331 (S331) interacts with 4-imidazolone-5-propanoate.

This sequence belongs to the metallo-dependent hydrolases superfamily. HutI family. Requires Zn(2+) as cofactor. It depends on Fe(3+) as a cofactor.

Its subcellular location is the cytoplasm. It catalyses the reaction 4-imidazolone-5-propanoate + H2O = N-formimidoyl-L-glutamate. The protein operates within amino-acid degradation; L-histidine degradation into L-glutamate; N-formimidoyl-L-glutamate from L-histidine: step 3/3. In terms of biological role, catalyzes the hydrolytic cleavage of the carbon-nitrogen bond in imidazolone-5-propanoate to yield N-formimidoyl-L-glutamate. It is the third step in the universal histidine degradation pathway. This chain is Imidazolonepropionase, found in Streptococcus pyogenes serotype M28 (strain MGAS6180).